A 445-amino-acid chain; its full sequence is Cyclin-B1-2 (445 aa).

It belongs to the cyclin family. Cyclin AB subfamily. Interacts with FZR2/CCS52A1, FZR1/CCS52A2 and FZR3/CCS52B. Expressed in roots, stems and flowers.

In terms of biological role, may induce mitotic cell division. In Arabidopsis thaliana (Mouse-ear cress), this protein is Cyclin-B1-2 (CYCB1-2).